Here is a 616-residue protein sequence, read N- to C-terminus: Dihydroxy-acid dehydratase (616 aa).

Asp81 lines the Mg(2+) pocket. Position 122 (Cys122) interacts with [2Fe-2S] cluster. Residues Asp123 and Lys124 each contribute to the Mg(2+) site. Lys124 is subject to N6-carboxylysine. Position 195 (Cys195) interacts with [2Fe-2S] cluster. Glu491 provides a ligand contact to Mg(2+). Catalysis depends on Ser517, which acts as the Proton acceptor.

This sequence belongs to the IlvD/Edd family. Homodimer. It depends on [2Fe-2S] cluster as a cofactor. Mg(2+) serves as cofactor.

It carries out the reaction (2R)-2,3-dihydroxy-3-methylbutanoate = 3-methyl-2-oxobutanoate + H2O. The enzyme catalyses (2R,3R)-2,3-dihydroxy-3-methylpentanoate = (S)-3-methyl-2-oxopentanoate + H2O. The protein operates within amino-acid biosynthesis; L-isoleucine biosynthesis; L-isoleucine from 2-oxobutanoate: step 3/4. It participates in amino-acid biosynthesis; L-valine biosynthesis; L-valine from pyruvate: step 3/4. Functionally, functions in the biosynthesis of branched-chain amino acids. Catalyzes the dehydration of (2R,3R)-2,3-dihydroxy-3-methylpentanoate (2,3-dihydroxy-3-methylvalerate) into 2-oxo-3-methylpentanoate (2-oxo-3-methylvalerate) and of (2R)-2,3-dihydroxy-3-methylbutanoate (2,3-dihydroxyisovalerate) into 2-oxo-3-methylbutanoate (2-oxoisovalerate), the penultimate precursor to L-isoleucine and L-valine, respectively. In Shigella flexneri, this protein is Dihydroxy-acid dehydratase.